A 637-amino-acid chain; its full sequence is MNRVFRNTIFYLLILLVVIGVVSYFQTSNPKTENMSYSTFIKNLDDGKVDSVSVQPVRGVYEVKGQLKNYDKDQYFLTHVPEGKGADQIFNALKKTDVKVEPAQETSGWVTFLTTIIPFVIIFILFFFLLNQAQGGGSRVMNFGKSKAKLYTEEKKRVKFKDVAGADEEKQELVEVVEFLKDPRKFAELGARIPKGVLLVGPPGTGKTLLAKACAGEAGVPFFSISGSDFVEMFVGVGASRVRDLFENAKKNAPCLIFIDEIDAVGRQRGAGLGGGHDEREQTLNQLLVEMDGFSANEGIIIIAATNRADILDPALLRPGRFDRQITVDRPDVIGREAVLKVHARNKPLDETVNLKSIAMRTPGFSGADLENLLNEAALVAARQNKKKIDARDIDEATDRVIAGPAKKSRVISKKERNIVAYHEGGHTVIGLVLDEADMVHKVTIVPRGQAGGYAVMLPREDRYFQTKPELLDKIVGLLGGRVAEEIIFGEVSTGAHNDFQRATNIARRMVTEFGMSEKLGPLQFGQSQGGQVFLGRDFNNEQNYSDQIAYEIDQEIQRIIKECYERAKQILTENRDKLELIAQTLLKVETLDAEQIKHLIDHGTLPERNFSDDEKNDDVKVNILTKTEEKKDDTKE.

Residues 1–7 (MNRVFRN) are Cytoplasmic-facing. Residues 8–28 (TIFYLLILLVVIGVVSYFQTS) traverse the membrane as a helical segment. Over 29–109 (NPKTENMSYS…VEPAQETSGW (81 aa)) the chain is Extracellular. A helical transmembrane segment spans residues 110–130 (VTFLTTIIPFVIIFILFFFLL). The Cytoplasmic segment spans residues 131-637 (NQAQGGGSRV…TEEKKDDTKE (507 aa)). 201 to 208 (GPPGTGKT) contacts ATP. H423 contacts Zn(2+). E424 is an active-site residue. Residues H427 and D499 each contribute to the Zn(2+) site. Residues 514-637 (FGMSEKLGPL…TEEKKDDTKE (124 aa)) are not necessary for FtsH function.

In the central section; belongs to the AAA ATPase family. This sequence in the C-terminal section; belongs to the peptidase M41 family. In terms of assembly, homohexamer. Interacts with FloT at midcell. Interacts with FloA at midcell. Another study shows only minor colocalization with FloA or FloT. Requires Zn(2+) as cofactor.

Its subcellular location is the cell membrane. The protein resides in the membrane raft. Functionally, acts as a processive, ATP-dependent zinc metallopeptidase for both cytoplasmic and membrane proteins. Plays a role in the quality control of integral membrane proteins. In vitro partially degrades Spo0E, the phosphatase that acts on Spo0A-P. Recognition requires the last 14 residues of Spo0E. Its stabile accumulation requires FlotA and Flot. May degrade EzrA. This is ATP-dependent zinc metalloprotease FtsH from Bacillus subtilis (strain 168).